Here is a 597-residue protein sequence, read N- to C-terminus: Indole-3-acetic acid-amido synthetase GH3.4 (597 aa).

It belongs to the IAA-amido conjugating enzyme family.

Its function is as follows. Catalyzes the synthesis of indole-3-acetic acid (IAA)-amino acid conjugates, providing a mechanism for the plant to cope with the presence of excess auxin. Strongly reactive with Glu, Gln, Trp, Asp, Ala, Leu, Phe, Gly, Tyr, Met, Ile and Val. Little or no product formation with His, Ser, Thr, Arg, Lys, or Cys. Also active on pyruvic and butyric acid analogs of IAA, PAA and the synthetic auxin naphthaleneacetic acid (NAA). The two chlorinated synthetic auxin herbicides 2,4-D and 3,6-dichloro-o-anisic acid (dicamba) cannot be used as substrates. The polypeptide is Indole-3-acetic acid-amido synthetase GH3.4 (GH3.4) (Arabidopsis thaliana (Mouse-ear cress)).